A 923-amino-acid chain; its full sequence is Calmodulin-binding transcription activator 5 (923 aa).

A DNA-binding region (CG-1) is located at residues 25 to 151 (IQTMLDEAYS…YRETHEVHAA (127 aa)). The interval 272-372 (VYQNNNSCGA…HSHSDIPEQV (101 aa)) is transcription activation. The stretch at 611 to 640 (QGWTALHWAAYYGREKMVAALLSAGARPNL) is one ANK repeat. 3 IQ domains span residues 757–786 (NIIAAMKIQHAFRNFEVRRKIAAAARIQYR), 799–828 (MRKKAIRIQAAFRGFQVRRQYQKITWSVGV), and 875–904 (LERSVVKVQAMFRSKKAQQDYRRMKLAHEE). A calmodulin-binding region spans residues 824 to 846 (WSVGVLEKAILRWRLKRKGFRGL). Positions 887–914 (RSKKAQQDYRRMKLAHEEAQLEYDGMQE) form a coiled coil.

The protein belongs to the CAMTA family. As to expression, expressed in roots, stems, leaves, pollen, top of sepals and siliques.

Its subcellular location is the nucleus. Functionally, transcription activator. Binds to the DNA consensus sequence 5'-[ACG]CGCG[GTC]-3'. Regulates transcriptional activity in response to calcium signals. Binds calmodulin in a calcium-dependent manner. Involved in response to cold. Contributes together with CAMTA3 to the positive regulation of the cold-induced expression of DREB1A/CBF3, DREB1B/CBF1 and DREB1C/CBF2. This is Calmodulin-binding transcription activator 5 from Arabidopsis thaliana (Mouse-ear cress).